A 203-amino-acid polypeptide reads, in one-letter code: Nucleoside triphosphate pyrophosphatase (203 aa).

D80 serves as the catalytic Proton acceptor.

It belongs to the Maf family. It depends on a divalent metal cation as a cofactor.

The protein localises to the cytoplasm. It carries out the reaction a ribonucleoside 5'-triphosphate + H2O = a ribonucleoside 5'-phosphate + diphosphate + H(+). It catalyses the reaction a 2'-deoxyribonucleoside 5'-triphosphate + H2O = a 2'-deoxyribonucleoside 5'-phosphate + diphosphate + H(+). Its function is as follows. Nucleoside triphosphate pyrophosphatase. May have a dual role in cell division arrest and in preventing the incorporation of modified nucleotides into cellular nucleic acids. The chain is Nucleoside triphosphate pyrophosphatase from Gluconobacter oxydans (strain 621H) (Gluconobacter suboxydans).